The following is a 382-amino-acid chain: Sphingoid long-chain base transporter RSB1 (382 aa).

At 1–34 (MSNATNNTLGSLLPQLEAAANSNSLYGGMVPNLR) the chain is on the extracellular side. N-linked (GlcNAc...) asparagine glycans are attached at residues asparagine 3 and asparagine 6. The helical transmembrane segment at 35–55 (FNITMIVIWGILLTIHVVQLL) threads the bilayer. The Cytoplasmic portion of the chain corresponds to 56 to 57 (MR). A helical membrane pass occupies residues 58-78 (QYWFSIAFICTGILEVLGYIG). Residues 79 to 90 (RTWSHSNVADMD) are Extracellular-facing. A helical membrane pass occupies residues 91 to 111 (AFLLNMICLTIAPVFTMGGIY). Residues 112–135 (YQLAKLIEVYGHRFSLLPSPMAYS) lie on the Cytoplasmic side of the membrane. A helical membrane pass occupies residues 136–156 (FIFICSDIVSLVVQAVGGGLC). At 157-171 (GVAVTDGTSTTTGNH) the chain is on the extracellular side. Residues 172-192 (VFIAGLAIQVASMAIFLMLWF) form a helical membrane-spanning segment. Over 193-241 (HFLFRIYISVRWEHINSRPISLSLLKISQTEVDYLYREKFHFLRLEPKR) the chain is Cytoplasmic. The helical transmembrane segment at 242-262 (WVFHYFNLAMTVAVLTIFTRC) threads the bilayer. Over 263–281 (CYRLAELVVGWDGYLITHE) the chain is Extracellular. Residues 282–302 (WYFIILDALMMAIATVTLTIF) traverse the membrane as a helical segment. Residues 303 to 382 (HPGFAFKGRS…LFSSKKKAKL (80 aa)) are Cytoplasmic-facing.

The protein belongs to the lipid-translocating exporter (LTE) (TC 9.A.26.1) family.

It localises to the cell membrane. Its function is as follows. Catalyzes the ATP-dependent translocation of sphingoid long-chain bases (LCBs) from the cytoplasmic site toward the extracytoplasmic side of the membrane (flip-flop). Involved in the establishment of the functional lipid asymmetry of the plasma membrane. Regulates intracellular levels of LCBs, sphingolipid precursors that are growth inhibitory at increased levels. The protein is Sphingoid long-chain base transporter RSB1 (RSB1) of Saccharomyces cerevisiae (strain Lalvin EC1118 / Prise de mousse) (Baker's yeast).